A 521-amino-acid chain; its full sequence is MAETKKGSESYPIKTIVVLVQENRSFDHTLGWFKELNREIDGVMKSDQKFNPGFSSDLNSHNVVFGDQSQYVDPNPGHSIRDIYEQVFGKPWDSGHPDPNPGPATMSGFAQNAERKMKGMSSAVMNGFKPDALPVYKELVQNFAICDRWFASVPGATQPNRLFIHSATSHGTTNNERKLLIEGFPQKTIFESLDEAGFTFGIYYQCFPTTLFYRNLRKLKYLTRFHDYGLQFKKDCKEGNLPNYVVVEQRWYDLLLNPANDDHPSHDVSEGQKLVKEVYEALRSSPQWNEILFIITYDEHGGFYDHVPTPLDGVPNPDGILGPPPYNFEFNRLGVRVPTFFISPWIEPGTVLHGSNGPYLMSQYEHSSIPATVKKIFKLKDFLTKRDSWAGTFESVITRNSPRQDCPETLSNPVKMRGTVAKENAELSDFQEELVIVAAGLKGDYKNEELLYKLCKKTCVSDASKYVTKAFDKFVEESKKARERGGDENDIVFCVDDDDDHNVVKPPPSQSEPSHATPWSN.

A compositionally biased stretch (basic and acidic residues) spans 478–487 (SKKARERGGD). The disordered stretch occupies residues 478–521 (SKKARERGGDENDIVFCVDDDDDHNVVKPPPSQSEPSHATPWSN). Over residues 511 to 521 (SEPSHATPWSN) the composition is skewed to polar residues.

The protein belongs to the bacterial phospholipase C family. As to expression, specifically expressed in flowers.

The protein resides in the cytoplasm. It is found in the cytosol. It catalyses the reaction a 1,2-diacyl-sn-glycero-3-phosphocholine + H2O = phosphocholine + a 1,2-diacyl-sn-glycerol + H(+). Non-specific phospholipase C (PLC) which assumes minor PLC activity during inorganic phosphate starvation. Can hydrolyze both phosphatidylcholine (PC) and phosphatidylethanolamine (PE). Required for normal accumulation of digalactosyldiacylglycerol (DGDG) during phosphate limitation and may contribute to the conversion of phospholipids to diacylglycerol, the substrate for galactolipid synthesis. The protein is Non-specific phospholipase C5 (NPC5) of Arabidopsis thaliana (Mouse-ear cress).